The primary structure comprises 221 residues: Protein-L-isoaspartate O-methyltransferase (221 aa).

Residue Ser-64 is part of the active site.

It belongs to the methyltransferase superfamily. L-isoaspartyl/D-aspartyl protein methyltransferase family.

Its subcellular location is the cytoplasm. The catalysed reaction is [protein]-L-isoaspartate + S-adenosyl-L-methionine = [protein]-L-isoaspartate alpha-methyl ester + S-adenosyl-L-homocysteine. In terms of biological role, catalyzes the methyl esterification of L-isoaspartyl residues in peptides and proteins that result from spontaneous decomposition of normal L-aspartyl and L-asparaginyl residues. It plays a role in the repair and/or degradation of damaged proteins. This chain is Protein-L-isoaspartate O-methyltransferase, found in Thermococcus sibiricus (strain DSM 12597 / MM 739).